Here is a 473-residue protein sequence, read N- to C-terminus: Anthocyanidin 5,3-O-glucosyltransferase (473 aa).

It belongs to the UDP-glycosyltransferase family.

The protein operates within pigment biosynthesis; anthocyanin biosynthesis. In terms of biological role, sequentially catalyzes two glycosylation steps at the 5-OH and 3-OH positions of anthocyanidin. Unglycosylated anthocyanidin or anthocyanidin 5-O-glucoside, but not anthocyanidin 3-O-glucoside, can be used as glucosyl acceptor. This chain is Anthocyanidin 5,3-O-glucosyltransferase (RhGT1), found in Rosa hybrid cultivar.